A 336-amino-acid polypeptide reads, in one-letter code: GTP 3',8-cyclase (336 aa).

The Radical SAM core domain maps to 17–238 (GFSRRFHYLR…WTQQNRNLTD (222 aa)). Arginine 26 provides a ligand contact to GTP. 2 residues coordinate [4Fe-4S] cluster: cysteine 33 and cysteine 37. Residue tyrosine 39 participates in S-adenosyl-L-methionine binding. Cysteine 40 is a binding site for [4Fe-4S] cluster. GTP is bound at residue arginine 75. Position 79 (glycine 79) interacts with S-adenosyl-L-methionine. Threonine 106 lines the GTP pocket. Residue serine 130 coordinates S-adenosyl-L-methionine. Position 167 (lysine 167) interacts with GTP. S-adenosyl-L-methionine is bound at residue methionine 201. [4Fe-4S] cluster is bound by residues cysteine 264 and cysteine 267. Residue 269–271 (RLR) participates in GTP binding. Cysteine 281 is a binding site for [4Fe-4S] cluster.

Belongs to the radical SAM superfamily. MoaA family. Monomer and homodimer. [4Fe-4S] cluster serves as cofactor.

It catalyses the reaction GTP + AH2 + S-adenosyl-L-methionine = (8S)-3',8-cyclo-7,8-dihydroguanosine 5'-triphosphate + 5'-deoxyadenosine + L-methionine + A + H(+). The protein operates within cofactor biosynthesis; molybdopterin biosynthesis. Its function is as follows. Catalyzes the cyclization of GTP to (8S)-3',8-cyclo-7,8-dihydroguanosine 5'-triphosphate. This chain is GTP 3',8-cyclase, found in Tolumonas auensis (strain DSM 9187 / NBRC 110442 / TA 4).